The sequence spans 152 residues: Small ribosomal subunit protein uS17A (152 aa).

It belongs to the universal ribosomal protein uS17 family. In terms of assembly, component of the small ribosomal subunit (SSU). Mature yeast ribosomes consist of a small (40S) and a large (60S) subunit. The 40S small subunit contains 1 molecule of ribosomal RNA (18S rRNA) and at least 33 different proteins. The large 60S subunit contains 3 rRNA molecules (25S, 5.8S and 5S rRNA) and at least 46 different proteins.

It localises to the cytoplasm. The protein resides in the nucleus. In terms of biological role, component of the ribosome, a large ribonucleoprotein complex responsible for the synthesis of proteins in the cell. The small ribosomal subunit (SSU) binds messenger RNAs (mRNAs) and translates the encoded message by selecting cognate aminoacyl-transfer RNA (tRNA) molecules. The large subunit (LSU) contains the ribosomal catalytic site termed the peptidyl transferase center (PTC), which catalyzes the formation of peptide bonds, thereby polymerizing the amino acids delivered by tRNAs into a polypeptide chain. The nascent polypeptides leave the ribosome through a tunnel in the LSU and interact with protein factors that function in enzymatic processing, targeting, and the membrane insertion of nascent chains at the exit of the ribosomal tunnel. The chain is Small ribosomal subunit protein uS17A (rps1101) from Schizosaccharomyces pombe (strain 972 / ATCC 24843) (Fission yeast).